Here is a 456-residue protein sequence, read N- to C-terminus: Cell cycle checkpoint control protein Rad9 (456 aa).

Residues 300–302 carry the Nuclear localization signal motif; it reads KRK.

The protein belongs to the rad9 family. Component of the 9-1-1 checkpoint clamp complex consisting of Rad9 isoform A, Rad1 and Hus1-like; the interaction with Hus1-like is direct. Does not interact directly with Rad1; this interaction is probably mediated by Hus1-like. This complex probably also forms with Rad9 isoform B, however 9-1-1 complex containing Rad9 isoform A localizes to the nuclear periphery. Interacts with Brca2. In terms of tissue distribution, expressed in ovary.

The protein resides in the nucleus envelope. It is found in the nucleus. Component of the Rad9-Rad1-Hus1 (9-1-1) checkpoint clamp complex. Its function is as follows. Targets the 9-1-1 complex to the nuclear periphery. Targeting to the nuclear periphery is disrupted in the presence of persistent double stranded break DNA damage, possibly as a function of the meiotic checkpoint. The polypeptide is Cell cycle checkpoint control protein Rad9 (Drosophila melanogaster (Fruit fly)).